Here is an 86-residue protein sequence, read N- to C-terminus: Small ribosomal subunit protein bS18 (86 aa).

Belongs to the bacterial ribosomal protein bS18 family. As to quaternary structure, part of the 30S ribosomal subunit. Forms a tight heterodimer with protein bS6.

Binds as a heterodimer with protein bS6 to the central domain of the 16S rRNA, where it helps stabilize the platform of the 30S subunit. The sequence is that of Small ribosomal subunit protein bS18 from Heliobacterium modesticaldum (strain ATCC 51547 / Ice1).